A 110-amino-acid chain; its full sequence is Class I hydrophobin 2 (110 aa).

Residues 1–19 form the signal peptide; that stretch reads MFARAASVFVLSLPILATA. 4 cysteine pairs are disulfide-bonded: cysteine 29/cysteine 89, cysteine 36/cysteine 83, cysteine 37/cysteine 70, and cysteine 90/cysteine 103.

The protein belongs to the fungal hydrophobin family. In terms of assembly, self-assembles to form functional amyloid fibrils called rodlets. Self-assembly into fibrillar rodlets occurs spontaneously at hydrophobic:hydrophilic interfaces and the rodlets further associate laterally to form amphipathic monolayers.

It is found in the secreted. Its subcellular location is the cell wall. Functionally, aerial growth, conidiation, and dispersal of filamentous fungi in the environment rely upon a capability of their secreting small amphipathic proteins called hydrophobins (HPBs) with low sequence identity. Class I can self-assemble into an outermost layer of rodlet bundles on aerial cell surfaces, conferring cellular hydrophobicity that supports fungal growth, development and dispersal; whereas Class II form highly ordered films at water-air interfaces through intermolecular interactions but contribute nothing to the rodlet structure. Pnh2 is a class I hydrophobin that might be involved in the attachment of the hydrophilic wall of hyphae to the hydrophobic surface of wood under inorganic phosphate (Pi)-deficient conditions and enable the mycelium to degrade efficiently the components of wood and to acquire nutrients containing Pi. The chain is Class I hydrophobin 2 from Pholiota nameko.